The primary structure comprises 161 residues: Phosphopantetheine adenylyltransferase (161 aa).

Serine 8 lines the substrate pocket. ATP-binding positions include 8-9 (SF) and histidine 16. Substrate is bound by residues lysine 40, threonine 72, and arginine 86. Residues 87 to 89 (GLR), glutamate 97, and 122 to 128 (HSFLSSS) each bind ATP.

This sequence belongs to the bacterial CoaD family. In terms of assembly, homohexamer. It depends on Mg(2+) as a cofactor.

The protein localises to the cytoplasm. It catalyses the reaction (R)-4'-phosphopantetheine + ATP + H(+) = 3'-dephospho-CoA + diphosphate. Its pathway is cofactor biosynthesis; coenzyme A biosynthesis; CoA from (R)-pantothenate: step 4/5. Reversibly transfers an adenylyl group from ATP to 4'-phosphopantetheine, yielding dephospho-CoA (dPCoA) and pyrophosphate. This Prochlorococcus marinus (strain SARG / CCMP1375 / SS120) protein is Phosphopantetheine adenylyltransferase.